A 244-amino-acid chain; its full sequence is Tubulin-folding cofactor B (244 aa).

M1 bears the N-acetylmethionine mark. S65 is modified (phosphoserine; by PAK1). Position 98 is a phosphotyrosine (Y98). Position 110 is a phosphoserine (S110). Residue S128 is modified to Phosphoserine; by PAK1. In terms of domain architecture, CAP-Gly spans 183–225; that stretch reads GLTDFKPGYWVGVRYDEPLGKNDGSVNGKRYFECQAKYGAFVK. K219 is modified (N6-acetyllysine).

The protein belongs to the TBCB family. As to quaternary structure, supercomplex made of cofactors A to E. Cofactors A and D function by capturing and stabilizing tubulin in a quasi-native conformation. Cofactor E binds to the cofactor D-tubulin complex; interaction with cofactor C then causes the release of tubulin polypeptides that are committed to the native state. Cofactors B and E can form a heterodimer which binds to alpha-tubulin and enhances their ability to dissociate tubulin heterodimers. Interacts with GAN. Interacts with DCTN1. Phosphorylation by PAK1 is required for normal function. In terms of processing, ubiquitinated in the presence of GAN which targets it for degradation by the proteasome. As to expression, widely expressed with highest levels in brain. Broadly distributed throughout the neonate brain but restricted mainly to ependymary cells in the adult brain where it is concentrated in the cilia.

It is found in the cytoplasm. The protein resides in the cytoskeleton. In terms of biological role, binds to alpha-tubulin folding intermediates after their interaction with cytosolic chaperonin in the pathway leading from newly synthesized tubulin to properly folded heterodimer. Involved in regulation of tubulin heterodimer dissociation. May function as a negative regulator of axonal growth. This Mus musculus (Mouse) protein is Tubulin-folding cofactor B (Tbcb).